The following is a 1948-amino-acid chain: MGVKKKKEMQVTALTICHQDLETLRFLADVEGKNLASLLLYCVQLTDGVSQIHYVKQIVPLLEKADKNGACDPIIRSCLDILAGIYLSLSVKNPLKKVLASSLNGLPEFFLTEAIQSFTSRLQEELNTTDLYSYRKVIDNISSCMENFDLGRAGVNNLLKNVLHFLQKSLIEISEENRKFAGNRIVQTQLMNDLLVGTRVSVMLVQKIQDIQRIHLKTSSSPTWQSMCGLLSIFTKFLSDDDLLQTIQSTSGLAVILFIKAMFHPPEKIPDLISSLLLRSVDCTSIPDWFLNCCRSLCCTDVSQSTLLFLCQGTLTMLDWQNGSMDLSGEALLLNIVHILFTLSSQIKESTLELFLSRILASWTNSAIHVLKSSSPSLKNSLNGKSSVVGRLLEYVYTHWEHPLDALRHQTKIIFRNILQMHQLTKEKSNSEVSGLAADHFICDLTEGLLRLEWHVKGKYTCLGCLVDYIGIGHILALAKTIPSQILEVMGDQSLVPYASDLLETMFRSHKNHLKSQALDSTWIDEWHETWVSPLLFILCEGNLDQKSYVIDYYLPKLLNCSPESLSYMVKILQTSADAKTGSYNSRGALGALMACLRTARAHGHLQSATDTWRNLVSSARIKQGLIHQHCQVRIDTLGLLCESNRSTEIVSTEEMQWIQFFITYNLNSQSPGVRQQICSLLKKLFCRIQESSQVLYKQEQSRSKHEPENELTKQHPSVSLQQYKNFMSSICSHLFEALFPGSSYPTRFSALTILGSIAEVFPVTEGQVQAVYQLSHDIDVGRFQTLMECFTSTFEEVKILAFDLLMKLPKTVVQFQDSEKLQGLFQAALELSSSTKPYDCVTASYLLNFLIWQDVLPSSLFDSLKTQQTACEDGDKSAIVVERNTLMVIKCLLENLEEEVSQAENSLLQAAASFPLYGRVHCVTGALQRLSLNNLQLVSEWRPVIEKLLLMSYRLSAVVSPVIQSSSPEGLIPMDTDSESASRLQTILNEIQPRDTNDYFTQAKILKEHDSFDLEDLNVSVQNIGASAEVKGKERKTCDVTAQMVLVCCWRSMKEVALLLGTLCQLLPMQSVPESSNGLLTEEQVKEIGDYFKQHLLQSRHRGAFELAYTGFVKLTEILNRCPNVSLQKLPEQWLWNVLEEIKCSDPSSKLCATRRSAGIPFYIQALLASEPKKGKMDLLKITMKELISLAGPTDDSQSTVPQVHALNILRALFRDTRLGENIIPYVADGAKAAILGFTSPVWAVRNSSTLLFSTLITRIFGVKRGKDELSKKNRMTGSEFFSRFPELYPFLLQQLEAVANTVDSDTGELNRHPSMFLLLLVLGRLYPSPMDGTYSALSMAPFIPFIMRCGRSPDYRSREMAARALVPFVMVDEIPTTIRTLLAKLPNCTDQRFRQNHIHGTLLQVFHLLQAFTDSKYRLNTYFQQELADVAVCTRAKLWLAERQNPCLVTRAVYIDILFLLTRCLDKPTKGNQPAVECLGFWEDVRRIISGSELITGFTYTFTVPGLPQYLQSLTKLAITTAAVAAQAGEQAGNIPISFSQLLESSFPEVRLLTLEALLERFSTAALGLGEKGLPPLQRNMGETFLMLAVKENHPECFCKILKILHCMDPSEWLSHMQRCIHLTPKEFLIWTMDIASNERSEVQSVALRLASRVIAHHLQMCEETRDSVAPTLKQWVQLVVSSCGEHLPTESRLAAAEALTSTTPFLLTSPHPVLGLQDTLALWRCVLTLLQSEEQAVRDAATGTVVTAMSQENTCRSTEFAFCQVDASIALTLALAVLCDLLQQWDQLALGLPVLLGWLLGEDDDFVVHLENTHQVEDYLFEKAEINFWAETLIFVKYLHEHLLRLLSTSSRRPLSPESLRHLRRTASEQGHLLSQLFRELPPAAEFLKTVEFTRLRIQEERTLACLQLLAFLEGKEREDTPVLRASDSPAEANQFTLAKTETAH.

A coiled-coil region spans residues 883 to 915 (ERNTLMVIKCLLENLEEEVSQAENSLLQAAASF). Ser1012, Ser1021, and Ser1158 each carry phosphoserine. Residues 1924–1948 (TPVLRASDSPAEANQFTLAKTETAH) form a disordered region. Residues 1935 to 1948 (EANQFTLAKTETAH) are compositionally biased toward polar residues.

It belongs to the THADA family.

Its function is as follows. Together with methyltransferase FTSJ1, methylates the 2'-O-ribose of nucleotides at position 32 of the anticodon loop of substrate tRNAs. The chain is tRNA (32-2'-O)-methyltransferase regulator THADA (THADA) from Canis lupus familiaris (Dog).